Consider the following 405-residue polypeptide: Adenylosuccinate synthetase (405 aa).

GTP-binding positions include 12–18 (GDEGKGK) and 40–42 (GHT). The active-site Proton acceptor is aspartate 13. Mg(2+) is bound by residues aspartate 13 and glycine 40. IMP is bound by residues 13–16 (DEGK), 38–41 (NAGH), threonine 121, arginine 135, glutamine 213, threonine 228, and arginine 297. Histidine 41 acts as the Proton donor in catalysis. 293–299 (TTTGRAR) contacts substrate. GTP contacts are provided by residues arginine 299, 325 to 327 (KMD), and 390 to 392 (SAG).

Belongs to the adenylosuccinate synthetase family. In terms of assembly, homodimer. Mg(2+) serves as cofactor.

The protein localises to the cytoplasm. It carries out the reaction IMP + L-aspartate + GTP = N(6)-(1,2-dicarboxyethyl)-AMP + GDP + phosphate + 2 H(+). The protein operates within purine metabolism; AMP biosynthesis via de novo pathway; AMP from IMP: step 1/2. Plays an important role in the de novo pathway of purine nucleotide biosynthesis. Catalyzes the first committed step in the biosynthesis of AMP from IMP. In Deinococcus deserti (strain DSM 17065 / CIP 109153 / LMG 22923 / VCD115), this protein is Adenylosuccinate synthetase.